The following is a 111-amino-acid chain: MAGRPAVSASSRWLEGIRKWYYNAAGFNKLGLMRDDTIHENDDVKEAIRRLPENLYNDRVFRIKRALDLSMRQQILPKEQWTKYEEDKSYLEPYLKEVIRERKEREEWAKK.

An N-acetylalanine modification is found at alanine 2. Lysine 19 carries the N6-acetyllysine modification. The residue at position 78 (lysine 78) is an N6-acetyllysine; alternate. Position 78 is an N6-succinyllysine; alternate (lysine 78). The residue at position 83 (lysine 83) is an N6-acetyllysine. Position 88 is an N6-acetyllysine; alternate (lysine 88). Lysine 88 bears the N6-succinyllysine; alternate mark. An N6-acetyllysine modification is found at lysine 96.

The protein belongs to the UQCRB/QCR7 family. As to quaternary structure, component of the ubiquinol-cytochrome c oxidoreductase (cytochrome b-c1 complex, complex III, CIII), a multisubunit enzyme composed of 11 subunits. The complex is composed of 3 respiratory subunits cytochrome b, cytochrome c1 and Rieske protein UQCRFS1, 2 core protein subunits UQCRC1/QCR1 and UQCRC2/QCR2, and 6 low-molecular weight protein subunits UQCRH/QCR6, UQCRB/QCR7, UQCRQ/QCR8, UQCR10/QCR9, UQCR11/QCR10 and subunit 9, the cleavage product of Rieske protein UQCRFS1. The complex exists as an obligatory dimer and forms supercomplexes (SCs) in the inner mitochondrial membrane with NADH-ubiquinone oxidoreductase (complex I, CI) and cytochrome c oxidase (complex IV, CIV), resulting in different assemblies (supercomplex SCI(1)III(2)IV(1) and megacomplex MCI(2)III(2)IV(2)).

The protein localises to the mitochondrion inner membrane. In terms of biological role, component of the ubiquinol-cytochrome c oxidoreductase, a multisubunit transmembrane complex that is part of the mitochondrial electron transport chain which drives oxidative phosphorylation. The respiratory chain contains 3 multisubunit complexes succinate dehydrogenase (complex II, CII), ubiquinol-cytochrome c oxidoreductase (cytochrome b-c1 complex, complex III, CIII) and cytochrome c oxidase (complex IV, CIV), that cooperate to transfer electrons derived from NADH and succinate to molecular oxygen, creating an electrochemical gradient over the inner membrane that drives transmembrane transport and the ATP synthase. The cytochrome b-c1 complex catalyzes electron transfer from ubiquinol to cytochrome c, linking this redox reaction to translocation of protons across the mitochondrial inner membrane, with protons being carried across the membrane as hydrogens on the quinol. In the process called Q cycle, 2 protons are consumed from the matrix, 4 protons are released into the intermembrane space and 2 electrons are passed to cytochrome c. The polypeptide is Cytochrome b-c1 complex subunit 7 (UQCRB) (Bos taurus (Bovine)).